Consider the following 926-residue polypeptide: MPHKIGFVVVSSSGHEDGFSARELMIHAPTVSGWRSPKFCQFPQEIVLQMVERCRVRKLQLLAHQYMISSKVEFYISESLPEYLVPYQAERFRRLGYVSLCDNEKTGCKARELKSVYVDAVGQFLKLIFHQNHANKYNIYNQVALVAINIIGDPADLGDESNITSREKLIDHYLGHSPHNPEDPALDGTFSGRSDYISPLDDLAFDMYQDPEVAQIIRRLDERKREAVKKERYDHAKKLKQAIADLQKVGERLGRYEVEKRCAVEKEDYDLAKEKKQQMARYRAQVYEQLELHGLLQGEPEMQRPFALPLQPLASPSSPQHWKAVSSLPRTEKLVAEDSFAGPVLQEKPSASSPQHSAVDPSPPAAGHAPRSHTEVLPYDERPLPVTRKQLGEASAEAEVKEADSDVRRRGVAGEPEPLTEKALREASAAIDTLGEALVAGAYSKMWSCREDALLALYKKLMEMPVGTQKEDLKNMLRASVFLIRRAIKDIVASVFQASLKLLKMIITQYIPKHKLGKLDTTHCVERAFPLLLARAGDSSARLRVMALNFIQEMALFKEVKSLQLIPSYLVQPLKANASVHLAMSQVDLLARLLRDLGTESSGFTVDNVMKFAVSALEHRVYEVRETAVRIILDMYRQHPALTLEHLPPDDSATRRNLLYKAIFEGFAKIDGSVLPTEAEVRAQKRVATKEAEKQKKEEMKALQGQSGELRETQAGVQEKESEAVKLRNQDPQGRKAVLPDTPEIPANHFLDNLCIFCGERNESFTEEGLDLHYWKHCLMLTRCDHCRQVVEISSLTEHLLTECDRRDGFGKCPRCSEAIPKEELPGHIKTKECSPAKPEKVANHCPLCHENFAPGEEAWKVHLMGPAGCTMNLRKTHVLYKATAPQQGKGPAAAKSSTSAPKVGSKIPTPKGGLSKSSSRTYMRR.

A coiled-coil region spans residues 212 to 279 (EVAQIIRRLD…DLAKEKKQQM (68 aa)). Positions 345–419 (LQEKPSASSP…RGVAGEPEPL (75 aa)) are disordered. Residues 398–409 (AEVKEADSDVRR) show a composition bias toward basic and acidic residues. HEAT repeat units follow at residues 522–558 (THCVERAFPLLLARAGDSSARLRVMALNFIQEMALFK) and 603–639 (GFTVDNVMKFAVSALEHRVYEVRETAVRIILDMYRQH). Residues 678-730 (EAEVRAQKRVATKEAEKQKKEEMKALQGQSGELRETQAGVQEKESEAVKLRNQ) adopt a coiled-coil conformation. Composition is skewed to basic and acidic residues over residues 690–701 (KEAEKQKKEEMK) and 718–729 (QEKESEAVKLRN). Disordered regions lie at residues 690-741 (KEAE…VLPD) and 885-926 (APQQ…YMRR). Over residues 889-903 (GKGPAAAKSSTSAPK) the composition is skewed to low complexity. Polar residues predominate over residues 916–926 (SKSSSRTYMRR).

As to quaternary structure, interacts with CCP110 and CEP97. Interacts with ARMC9, TOGARAM1, CCDC66 and CSPP1.

Its subcellular location is the cell projection. The protein resides in the cilium. It is found in the cytoplasm. The protein localises to the cytoskeleton. It localises to the microtubule organizing center. Its subcellular location is the centrosome. The protein resides in the centriole. It is found in the spindle pole. Functionally, required for ciliogenesis and for structural integrity at the ciliary tip. The protein is Centrosomal protein of 104 kDa (Cep104) of Mus musculus (Mouse).